The following is a 99-amino-acid chain: Aspartyl/glutamyl-tRNA(Asn/Gln) amidotransferase subunit C (99 aa).

Belongs to the GatC family. In terms of assembly, heterotrimer of A, B and C subunits.

The enzyme catalyses L-glutamyl-tRNA(Gln) + L-glutamine + ATP + H2O = L-glutaminyl-tRNA(Gln) + L-glutamate + ADP + phosphate + H(+). The catalysed reaction is L-aspartyl-tRNA(Asn) + L-glutamine + ATP + H2O = L-asparaginyl-tRNA(Asn) + L-glutamate + ADP + phosphate + 2 H(+). Functionally, allows the formation of correctly charged Asn-tRNA(Asn) or Gln-tRNA(Gln) through the transamidation of misacylated Asp-tRNA(Asn) or Glu-tRNA(Gln) in organisms which lack either or both of asparaginyl-tRNA or glutaminyl-tRNA synthetases. The reaction takes place in the presence of glutamine and ATP through an activated phospho-Asp-tRNA(Asn) or phospho-Glu-tRNA(Gln). The chain is Aspartyl/glutamyl-tRNA(Asn/Gln) amidotransferase subunit C from Mycobacterium leprae (strain Br4923).